The primary structure comprises 104 residues: Large ribosomal subunit protein bL21 (104 aa).

This sequence belongs to the bacterial ribosomal protein bL21 family. As to quaternary structure, part of the 50S ribosomal subunit. Contacts protein L20.

Functionally, this protein binds to 23S rRNA in the presence of protein L20. The protein is Large ribosomal subunit protein bL21 of Rhodopirellula baltica (strain DSM 10527 / NCIMB 13988 / SH1).